Consider the following 156-residue polypeptide: Aspartate carbamoyltransferase regulatory chain (156 aa).

Zn(2+) contacts are provided by cysteine 107, cysteine 112, cysteine 137, and cysteine 140.

It belongs to the PyrI family. Contains catalytic and regulatory chains. It depends on Zn(2+) as a cofactor.

Its function is as follows. Involved in allosteric regulation of aspartate carbamoyltransferase. The sequence is that of Aspartate carbamoyltransferase regulatory chain from Methanopyrus kandleri (strain AV19 / DSM 6324 / JCM 9639 / NBRC 100938).